The following is an 853-amino-acid chain: DNA mismatch repair protein MutS (853 aa).

616–623 (GPNMGGKS) serves as a coordination point for ATP.

This sequence belongs to the DNA mismatch repair MutS family.

In terms of biological role, this protein is involved in the repair of mismatches in DNA. It is possible that it carries out the mismatch recognition step. This protein has a weak ATPase activity. This Erwinia tasmaniensis (strain DSM 17950 / CFBP 7177 / CIP 109463 / NCPPB 4357 / Et1/99) protein is DNA mismatch repair protein MutS.